The primary structure comprises 221 residues: Vesicle-associated membrane protein 714 (221 aa).

Ala2 is subject to N-acetylalanine. Residues 2-190 lie on the Cytoplasmic side of the membrane; it reads AIVYAVVARG…RRALWMKNAK (189 aa). The 106-residue stretch at 7–112 folds into the Longin domain; the sequence is VVARGTVVLA…AMNDEFSRVL (106 aa). Residues 127–187 form the v-SNARE coiled-coil homology domain; it reads TLNRVRGEVS…KRLRRALWMK (61 aa). The chain crosses the membrane as a helical; Anchor for type IV membrane protein span at residues 191–211; sequence LLVLLTCLIVFLLYIIIASFC. The Vesicular segment spans residues 212–221; it reads GGITLPSCRS.

The protein belongs to the synaptobrevin family. In terms of tissue distribution, highly expressed in leaves, stems and roots. Detected in flowers.

Its subcellular location is the golgi apparatus membrane. Its function is as follows. Involved in the targeting and/or fusion of transport vesicles to their target membrane. The protein is Vesicle-associated membrane protein 714 of Arabidopsis thaliana (Mouse-ear cress).